Consider the following 161-residue polypeptide: Regulator of ribonuclease activity A (161 aa).

The protein belongs to the RraA family. Homotrimer. Binds to both RNA-binding sites in the C-terminal region of Rne and to RhlB.

The protein resides in the cytoplasm. Globally modulates RNA abundance by binding to RNase E (Rne) and regulating its endonucleolytic activity. Can modulate Rne action in a substrate-dependent manner by altering the composition of the degradosome. Modulates RNA-binding and helicase activities of the degradosome. This chain is Regulator of ribonuclease activity A, found in Idiomarina loihiensis (strain ATCC BAA-735 / DSM 15497 / L2-TR).